The chain runs to 737 residues: Angiotensin-converting enzyme-like protein Ace3 (737 aa).

The first 23 residues, 1–23 (MNLPWALLLVLLSHRQLLPWLRT), serve as a signal peptide directing secretion. Over 24 to 639 (VGETSLNDFY…TDTEPEQAYL (616 aa)) the chain is Extracellular. The Peptidase M2 domain maps to 32 to 611 (FYSEAQAKLF…VKQGDTLGWP (580 aa)). A disulfide bridge links Cys-146 with Cys-152. 2 residues coordinate chloride: Arg-180 and Tyr-218. Cysteines 346 and 364 form a disulfide. His-377 and His-381 together coordinate Zn(2+). A glycan (N-linked (GlcNAc...) asparagine) is linked at Asn-390. Residue Glu-405 participates in Zn(2+) binding. 3 residues coordinate chloride: Trp-479, Arg-483, and Arg-516. Cysteines 532 and 544 form a disulfide. A helical membrane pass occupies residues 640–660 (GQWVLLSMSFFMLVLILALGF). At 661–700 (RLHYLEKQLLDEDTMILKTLPYSYFLGIAMEPHQAARKQW) the chain is on the cytoplasmic side. Residues 701–721 (LLLGLCCILMLCCIGLLIRIV) form a helical membrane-spanning segment. Residues 722–737 (TQNTENTPWMKNEGQS) lie on the Extracellular side of the membrane.

Belongs to the peptidase M2 family. Interacts with IZUMO1. Requires Zn(2+) as cofactor. As to expression, expressed in sperm and testis (at protein level). Expressed in heart and testis. Not detected in kidney, lung, liver, brain, ovary, spleen and thymus.

Its subcellular location is the cytoplasmic vesicle. The protein resides in the secretory vesicle. It localises to the acrosome membrane. This is Angiotensin-converting enzyme-like protein Ace3 from Mus musculus (Mouse).